We begin with the raw amino-acid sequence, 314 residues long: NF-kappa-B inhibitor alpha (314 aa).

A disordered region spans residues 1 to 39; sequence MFQPAGHGQDWAMEGPRDGLKKERLVDDRHDSGLDSMKD. The span at 15 to 39 shows a compositional bias: basic and acidic residues; that stretch reads GPRDGLKKERLVDDRHDSGLDSMKD. A Glycyl lysine isopeptide (Lys-Gly) (interchain with G-Cter in SUMO); alternate cross-link involves residue K21. A Glycyl lysine isopeptide (Lys-Gly) (interchain with G-Cter in ubiquitin); alternate cross-link involves residue K21. A Glycyl lysine isopeptide (Lys-Gly) (interchain with G-Cter in ubiquitin) cross-link involves residue K22. The Destruction motif motif lies at 30-36; the sequence is HDSGLDS. Position 32 is a phosphoserine; by IKKA and IKKB (S32). S36 is subject to Phosphoserine; by IKKA, IKKB, IKKE and TBK1. The residue at position 42 (Y42) is a Phosphotyrosine; by Tyr-kinases. The Nuclear export signal motif lies at 45–54; that stretch reads MVKELREIRL. Residues 110 to 120 carry the Nuclear import signal motif; that stretch reads LQQTPLHLAVI. ANK repeat units lie at residues 110 to 139, 143 to 172, 182 to 211, and 216 to 245; these read LQQT…DPEL, RGNT…PQHL, NGHT…DVNA, and NGRT…DVNR. (3S)-3-hydroxyasparagine; by HIF1AN occurs at positions 210 and 244. 2 positions are modified to phosphoserine; by CK2: S283 and S288. Phosphothreonine; by CK2 is present on T291. At S293 the chain carries Phosphoserine; by CK2. The residue at position 296 (T296) is a Phosphothreonine.

The protein belongs to the NF-kappa-B inhibitor family. Interacts with RELA; the interaction requires the nuclear import signal. Part of a 70-90 kDa complex at least consisting of CHUK, IKBKB, NFKBIA, RELA, ELP1 and MAP3K14. Interacts with NKIRAS1 and NKIRAS2. Interacts with RWDD3; the interaction enhances sumoylation. Interacts with PRMT2. Interacts with PRKACA in platelets; this interaction is disrupted by thrombin and collagen. Interacts with MEFV. Interacts with DDRGK1; positively regulates NFKBIA phosphorylation and degradation. Interacts with HNRNPA2B1; the interaction may be mediated by the RRM2 domain of HNRNPA2B1, and HNRNPA2B1 may interact simultaneously with FAM76B and either NFKBIA or NFKBIE to form a complex. Phosphorylated at Ser-32 and Ser-36 by IKKA/CHUK and IKKB/IKBKB; disables inhibition of NF-kappa-B DNA-binding activity. Phosphorylation at positions 32 and 36 is prerequisite to recognition by the SCF(FBXW11) and SCF(BTRC) complexes, leading to polyubiquitination and subsequent degradation. Post-translationally, polyubiquitinated at Lys-21 and/or Lys-22 following phosphorylation at Ser-32 and Ser-36. Monoubiquitinated at Lys-21 and/or Lys-22 by UBE2D3. Ubiquitin chain elongation is then performed by CDC34 in cooperation with the SCF(FBXW11) E3 ligase complex, building ubiquitin chains from the UBE2D3-primed NFKBIA-linked ubiquitin. The resulting polyubiquitination leads to protein degradation. Also ubiquitinated by the SCF(BTRC) complex following stimulus-dependent phosphorylation at Ser-32 and Ser-36. Deubiquitinated by USP38, leading to NF-kappa-B inhibition. In terms of processing, sumoylated; sumoylation requires the presence of the nuclear import signal. Sumoylation blocks ubiquitination and proteasome-mediated degradation of the protein thereby increasing the protein stability. Hydroxylated by HIF1AN.

The protein resides in the cytoplasm. It localises to the nucleus. In terms of biological role, inhibits the activity of dimeric NF-kappa-B/REL complexes by trapping REL (RELA/p65 and NFKB1/p50) dimers in the cytoplasm by masking their nuclear localization signals. On cellular stimulation by immune and pro-inflammatory responses, becomes phosphorylated promoting ubiquitination and degradation, enabling the dimeric RELA to translocate to the nucleus and activate transcription. This Rattus norvegicus (Rat) protein is NF-kappa-B inhibitor alpha (Nfkbia).